A 719-amino-acid polypeptide reads, in one-letter code: Phosphoribosylformylglycinamidine synthase subunit PurL (719 aa).

H47 is an active-site residue. ATP contacts are provided by Y50 and K89. E91 is a Mg(2+) binding site. Substrate-binding positions include 92–95 and R114; that span reads SHNH. The active-site Proton acceptor is H93. D115 provides a ligand contact to Mg(2+). Position 238 (Q238) interacts with substrate. Mg(2+) is bound at residue D266. A substrate-binding site is contributed by 310-312; that stretch reads ESQ. D488 and G525 together coordinate ATP. N526 contributes to the Mg(2+) binding site. S528 provides a ligand contact to substrate.

Belongs to the FGAMS family. Monomer. Part of the FGAM synthase complex composed of 1 PurL, 1 PurQ and 2 PurS subunits.

Its subcellular location is the cytoplasm. The enzyme catalyses N(2)-formyl-N(1)-(5-phospho-beta-D-ribosyl)glycinamide + L-glutamine + ATP + H2O = 2-formamido-N(1)-(5-O-phospho-beta-D-ribosyl)acetamidine + L-glutamate + ADP + phosphate + H(+). It participates in purine metabolism; IMP biosynthesis via de novo pathway; 5-amino-1-(5-phospho-D-ribosyl)imidazole from N(2)-formyl-N(1)-(5-phospho-D-ribosyl)glycinamide: step 1/2. Functionally, part of the phosphoribosylformylglycinamidine synthase complex involved in the purines biosynthetic pathway. Catalyzes the ATP-dependent conversion of formylglycinamide ribonucleotide (FGAR) and glutamine to yield formylglycinamidine ribonucleotide (FGAM) and glutamate. The FGAM synthase complex is composed of three subunits. PurQ produces an ammonia molecule by converting glutamine to glutamate. PurL transfers the ammonia molecule to FGAR to form FGAM in an ATP-dependent manner. PurS interacts with PurQ and PurL and is thought to assist in the transfer of the ammonia molecule from PurQ to PurL. In Jannaschia sp. (strain CCS1), this protein is Phosphoribosylformylglycinamidine synthase subunit PurL.